The chain runs to 172 residues: uncharacterized protein (172 aa).

Residues 3–171 (KKVAIILSNE…FNREIVKQLQ (169 aa)) form the PfpI endopeptidase domain.

It belongs to the peptidase C56 family.

This is an uncharacterized protein from Staphylococcus haemolyticus (strain JCSC1435).